The primary structure comprises 143 residues: Large ribosomal subunit protein uL16c (143 aa).

Belongs to the universal ribosomal protein uL16 family. As to quaternary structure, part of the 50S ribosomal subunit.

It localises to the plastid. Its subcellular location is the chloroplast. The sequence is that of Large ribosomal subunit protein uL16c from Spirogyra maxima (Green alga).